The following is a 365-amino-acid chain: NADH-quinone oxidoreductase subunit H 2 (365 aa).

The next 8 membrane-spanning stretches (helical) occupy residues 1 to 21 (MFVV…VVWA), 71 to 91 (LAPV…PFAP), 100 to 120 (VGVF…FLAG), 136 to 156 (IAQV…VVLI), 199 to 219 (FVSW…VFFI), 254 to 274 (ILFL…VVLF), 301 to 321 (IAGY…VVFL), and 342 to 362 (WKIL…WVVW).

The protein belongs to the complex I subunit 1 family. NDH-1 is composed of 14 different subunits. Subunits NuoA, H, J, K, L, M, N constitute the membrane sector of the complex.

Its subcellular location is the cell inner membrane. The enzyme catalyses a quinone + NADH + 5 H(+)(in) = a quinol + NAD(+) + 4 H(+)(out). NDH-1 shuttles electrons from NADH, via FMN and iron-sulfur (Fe-S) centers, to quinones in the respiratory chain. The immediate electron acceptor for the enzyme in this species is believed to be ubiquinone. Couples the redox reaction to proton translocation (for every two electrons transferred, four hydrogen ions are translocated across the cytoplasmic membrane), and thus conserves the redox energy in a proton gradient. This subunit may bind ubiquinone. This chain is NADH-quinone oxidoreductase subunit H 2, found in Cytophaga hutchinsonii (strain ATCC 33406 / DSM 1761 / CIP 103989 / NBRC 15051 / NCIMB 9469 / D465).